Reading from the N-terminus, the 483-residue chain is Nucleolar protein 4 (483 aa).

2 disordered regions span residues 210-418 and 435-483; these read QQDE…PIPS and SESR…DPQI. A compositionally biased stretch (acidic residues) spans 211-225; sequence QDEDESSIESDEFDM. 3 stretches are compositionally biased toward polar residues: residues 229-254, 262-271, and 302-317; these read TRMS…TVHG, AESSNGNETL, and QPLN…QLTS. 2 stretches are compositionally biased toward basic and acidic residues: residues 319–330 and 340–350; these read FRIDDQGSDGKN and LKMEREARENG. A compositionally biased stretch (polar residues) spans 351–363; the sequence is SKSPAHSYSSYDS. Composition is skewed to basic and acidic residues over residues 364-374, 391-409, and 435-451; these read GKNESVDRGAE, HEDS…ERLK, and SESR…KAQD. The span at 467 to 483 shows a compositional bias: polar residues; that stretch reads ATYSTATVPGSQEDPQI.

It localises to the nucleus. The protein localises to the nucleolus. In Mus musculus (Mouse), this protein is Nucleolar protein 4 (Nol4).